The primary structure comprises 537 residues: CTP synthase (537 aa).

The interval 1-265 is amidoligase domain; sequence MVHFIFVTGG…DNKVLKFFNI (265 aa). A CTP-binding site is contributed by serine 13. Position 13 (serine 13) interacts with UTP. Residues 14–19 and aspartate 71 contribute to the ATP site; that span reads SLGKGL. Residues aspartate 71 and glutamate 139 each coordinate Mg(2+). Residues 146 to 148 and lysine 222 contribute to the CTP site; that span reads DIE. Lysine 222 contacts UTP. Residues 290 to 536 enclose the Glutamine amidotransferase type-1 domain; sequence RIAIIAKYHK…IKAAIEYNKC (247 aa). Glycine 352 serves as a coordination point for L-glutamine. The active-site Nucleophile; for glutamine hydrolysis is cysteine 379. L-glutamine-binding positions include 380–383, glutamate 403, and arginine 464; that span reads FGMQ. Active-site residues include histidine 509 and glutamate 511.

It belongs to the CTP synthase family. Homotetramer.

The enzyme catalyses UTP + L-glutamine + ATP + H2O = CTP + L-glutamate + ADP + phosphate + 2 H(+). The catalysed reaction is L-glutamine + H2O = L-glutamate + NH4(+). It carries out the reaction UTP + NH4(+) + ATP = CTP + ADP + phosphate + 2 H(+). Its pathway is pyrimidine metabolism; CTP biosynthesis via de novo pathway; CTP from UDP: step 2/2. Allosterically activated by GTP, when glutamine is the substrate; GTP has no effect on the reaction when ammonia is the substrate. The allosteric effector GTP functions by stabilizing the protein conformation that binds the tetrahedral intermediate(s) formed during glutamine hydrolysis. Inhibited by the product CTP, via allosteric rather than competitive inhibition. Functionally, catalyzes the ATP-dependent amination of UTP to CTP with either L-glutamine or ammonia as the source of nitrogen. Regulates intracellular CTP levels through interactions with the four ribonucleotide triphosphates. This chain is CTP synthase, found in Rickettsia rickettsii (strain Iowa).